The sequence spans 184 residues: CASP-like protein 1U2 (184 aa).

The Cytoplasmic portion of the chain corresponds to 1–16 (MSYGCQVSDDEPNGSK). The chain crosses the membrane as a helical span at residues 17–37 (AVSLLLRLSTLALALTSAVVM). Residues 38-62 (ATASECTVVQLNGVVATITYKDFPP) lie on the Extracellular side of the membrane. Residues 63–83 (FVYLVGFNIAAAMLEAAAIYL) traverse the membrane as a helical segment. Topologically, residues 84 to 100 (RLSTGGGDDDDEGFKGK) are cytoplasmic. A helical membrane pass occupies residues 101-121 (LPGILLVVIDVAVQALVYTAT). Over 122–153 (GGAFAAVSAYGPQINACGAGAGRFCGQVHQSK) the chain is Extracellular. The helical transmembrane segment at 154–174 (LLSFAGSAAVGLAVVFRDVSL) threads the bilayer. The Cytoplasmic portion of the chain corresponds to 175 to 184 (PFSLWPTSSD).

Belongs to the Casparian strip membrane proteins (CASP) family. Homodimer and heterodimers.

It localises to the cell membrane. In Oryza sativa subsp. japonica (Rice), this protein is CASP-like protein 1U2.